A 590-amino-acid polypeptide reads, in one-letter code: MIVLSNGVRIFINSNMNKDIYLGIASFGFENDIGEILGIAHLLEHILISFDSSKFVANASTARKYMSFWCCSIKGKSNYIDSINTLISWFFNNNKLRDNFCLNDIKNHIKELENEYYFRNEVFHCMDVLTFLENGDLYNGGRIDMLNNLESVNNMLYNRMHKIIGPNIVIFVKELNKNCLMLIQNSFGTLPSCPMSFSFPNFSNIDGKIIMMPSPFYTVMIKVSLSISNVISIMCLFETYHLIDYETVGNDLYVTLSFVKESDYENFINGVSTLKFNNVPNYTVLSLCDDFLMNAYLCFPWLSNDINNYLSTVRYSQNMFKNLEEDIQNSILLKKYIVVYPHFSKTVFNKNDSQMHKIVILDCLNEIKEDQLPKLNVNLMKKQTKNEIFIKYNDSSLIKYIIFAIGYKNNILRGNEGVSIHHQFSSEDIKSILESDTFLKYSKSKPAAMYQYLLLSFFVSGYSIEDILLNRESTIKLLKQYNNKILFGKKSRYDITTKSNFVCGIIKNKNINNNVITNTMWELKKKGLIYSMEHTKIDKRIFYIFMFTIYPDEVFLYLSKKFLSHCLIVSKTGNIEDFSSMKKDVIIKLC.

Histidine 41 serves as a coordination point for Zn(2+). Glutamate 44 is an active-site residue. Histidine 45 serves as a coordination point for Zn(2+).

Belongs to the peptidase M44 family. Zn(2+) is required as a cofactor.

Its function is as follows. Seems to be involved in viral proteins maturation by cleavage at Ala-Gly-|-Xaa motifs. The sequence is that of Probable metalloendopeptidase G1-type from Homo sapiens (Human).